Consider the following 198-residue polypeptide: Cell division protein SepF (198 aa).

Positions Glu170 to Gln198 are disordered. The segment covering Ala179–Ala188 has biased composition (low complexity).

The protein belongs to the SepF family. Homodimer. Interacts with FtsZ.

It is found in the cytoplasm. In terms of biological role, cell division protein that is part of the divisome complex and is recruited early to the Z-ring. Probably stimulates Z-ring formation, perhaps through the cross-linking of FtsZ protofilaments. Its function overlaps with FtsA. In Trichormus variabilis (strain ATCC 29413 / PCC 7937) (Anabaena variabilis), this protein is Cell division protein SepF.